Reading from the N-terminus, the 447-residue chain is MPEADSSVLQIWGGHPLRGHVKISGAKNSALVIMAGALLCSGDCRIRNVPLLADVERMGEVISALGVRLTRQADIIDINASEIKTSKAPYELVTQLRASFFAIGAILARLGVAQMPLPGGCAIGARPVDLHVRGLQAMGAEVQIEHGICNAYVPGSGGRLKGAKIYLDTPSVGATETLMMAATLADGETILENAAREPEVVDLANFCKAMGANIQGAGTSTITIVGVPKLHSVDYSIIPDRIEAGTFLVAGAITRSEITLSSVVPDHLIPLIAKLRDIGVTIIEESPDCLRILPAEILKATDIDTLPHPGFPTDMQAPFMALLTLAEGDSIINESVFENRLRHASELNRLGADIRVKGNTAFVRGVPILSGAPVIGTDLRASAALVIAGLAAEGKTTIQGLHHLDRGYDQIDVKLQQLGAKILRVREEPANAEVAANNNASPAPIST.

27 to 28 provides a ligand contact to phosphoenolpyruvate; it reads KN. R97 provides a ligand contact to UDP-N-acetyl-alpha-D-glucosamine. The active-site Proton donor is the C121. Position 121 is a 2-(S-cysteinyl)pyruvic acid O-phosphothioketal (C121). UDP-N-acetyl-alpha-D-glucosamine is bound by residues 126-130, D314, and V336; that span reads RPVDL.

Belongs to the EPSP synthase family. MurA subfamily.

The protein resides in the cytoplasm. It catalyses the reaction phosphoenolpyruvate + UDP-N-acetyl-alpha-D-glucosamine = UDP-N-acetyl-3-O-(1-carboxyvinyl)-alpha-D-glucosamine + phosphate. The protein operates within cell wall biogenesis; peptidoglycan biosynthesis. In terms of biological role, cell wall formation. Adds enolpyruvyl to UDP-N-acetylglucosamine. This is UDP-N-acetylglucosamine 1-carboxyvinyltransferase from Trichormus variabilis (strain ATCC 29413 / PCC 7937) (Anabaena variabilis).